Consider the following 506-residue polypeptide: GPI mannosyltransferase 3 (506 aa).

N-linked (GlcNAc...) asparagine glycosylation is present at Asn-115. 6 helical membrane passes run 180–200, 229–249, 257–277, 285–305, 330–350, and 358–378; these read AFACFIRPTNILVWIFPLLFW, YGRLFGIFVLCVSLFLVNIIA, FVFPIISFFQFNVTSGLSSLY, YLSQALPLICGGFLPFVLLTM, FVYPISPILLTLAGKFFSSFS, and FFFLIGLGHALVITFLCRFHQ. Asn-395 carries N-linked (GlcNAc...) asparagine glycosylation.

Belongs to the glycosyltransferase 22 family. PIGB subfamily.

The protein localises to the endoplasmic reticulum membrane. The protein operates within glycolipid biosynthesis; glycosylphosphatidylinositol-anchor biosynthesis. Its function is as follows. Mannosyltransferase involved in glycosylphosphatidylinositol-anchor biosynthesis. Transfers the third mannose to Man2-GlcN-acyl-PI during GPI precursor assembly. The chain is GPI mannosyltransferase 3 (gpi10) from Schizosaccharomyces pombe (strain 972 / ATCC 24843) (Fission yeast).